Reading from the N-terminus, the 801-residue chain is Phosphatidylinositol 4-phosphate 5-kinase 1 (801 aa).

The first 21 residues, 1 to 21 (MPGLHVVSFLVVLLLQLRSSG), serve as a signal peptide directing secretion. MORN repeat units follow at residues 41–63 (YVGS…DGAL), 64–86 (YDGE…SGAS), 87–109 (YEGD…DGSV), 110–132 (YKGS…NSDT), 133–155 (YEGF…DGNV), 156–178 (YIGR…NGDT), 182–201 (NWLN…SGAC), and 202–223 (YIGT…PGSK). The PIPK domain maps to 366-797 (GHRSYYLMLN…RFISFLEKVF (432 aa)).

In terms of tissue distribution, expressed in young seedlings, shoot and seeds, and at lower level in roots, stem and leaf.

The enzyme catalyses a 1,2-diacyl-sn-glycero-3-phospho-(1D-myo-inositol 4-phosphate) + ATP = a 1,2-diacyl-sn-glycero-3-phospho-(1D-myo-inositol-4,5-bisphosphate) + ADP + H(+). In terms of biological role, involved in flowering. May suppress floral initiation by modifying the expression of genes related to floral induction. The chain is Phosphatidylinositol 4-phosphate 5-kinase 1 (PIPK1) from Oryza sativa subsp. japonica (Rice).